The sequence spans 218 residues: MNLSCSLVLLGGGRGERFNSPQPKQYTPLCGEPLILHALHSYQSLPFIQEIVVVCEEHYQELFSPYSVKFASPGALRQDSVFSGLQQVSLPWVCVHDGVRPFVYANEVSEVCSAALKTGAAALATSATYTIKSRTPVRTLDRDAVAVIHTPQCINTEILKEGLLLANMMDFTLSDDSEAAELLGIEPTLVFSNRVQMKITYPEDLLFAEALLSKAHIR.

It belongs to the IspD/TarI cytidylyltransferase family. IspD subfamily.

The catalysed reaction is 2-C-methyl-D-erythritol 4-phosphate + CTP + H(+) = 4-CDP-2-C-methyl-D-erythritol + diphosphate. It functions in the pathway isoprenoid biosynthesis; isopentenyl diphosphate biosynthesis via DXP pathway; isopentenyl diphosphate from 1-deoxy-D-xylulose 5-phosphate: step 2/6. Its function is as follows. Catalyzes the formation of 4-diphosphocytidyl-2-C-methyl-D-erythritol from CTP and 2-C-methyl-D-erythritol 4-phosphate (MEP). This is 2-C-methyl-D-erythritol 4-phosphate cytidylyltransferase from Chlamydia muridarum (strain MoPn / Nigg).